The following is a 248-amino-acid chain: 1-(5-phosphoribosyl)-5-[(5-phosphoribosylamino)methylideneamino] imidazole-4-carboxamide isomerase (248 aa).

The active-site Proton acceptor is Asp11. Asp132 (proton donor) is an active-site residue.

It belongs to the HisA/HisF family.

The protein resides in the cytoplasm. It carries out the reaction 1-(5-phospho-beta-D-ribosyl)-5-[(5-phospho-beta-D-ribosylamino)methylideneamino]imidazole-4-carboxamide = 5-[(5-phospho-1-deoxy-D-ribulos-1-ylimino)methylamino]-1-(5-phospho-beta-D-ribosyl)imidazole-4-carboxamide. Its pathway is amino-acid biosynthesis; L-histidine biosynthesis; L-histidine from 5-phospho-alpha-D-ribose 1-diphosphate: step 4/9. This Afipia carboxidovorans (strain ATCC 49405 / DSM 1227 / KCTC 32145 / OM5) (Oligotropha carboxidovorans) protein is 1-(5-phosphoribosyl)-5-[(5-phosphoribosylamino)methylideneamino] imidazole-4-carboxamide isomerase.